A 520-amino-acid chain; its full sequence is GMP synthase [glutamine-hydrolyzing] (520 aa).

Residues 9–202 (SVLIVDFGSQ…IHNVAGIKGD (194 aa)) form the Glutamine amidotransferase type-1 domain. Cys-86 (nucleophile) is an active-site residue. Active-site residues include His-176 and Glu-178. Residues 203 to 395 (WSMSAYRQKA…LGLPDSFIGR (193 aa)) enclose the GMPS ATP-PPase domain. 230–236 (SGGVDSS) provides a ligand contact to ATP.

In terms of assembly, homodimer.

The enzyme catalyses XMP + L-glutamine + ATP + H2O = GMP + L-glutamate + AMP + diphosphate + 2 H(+). It functions in the pathway purine metabolism; GMP biosynthesis; GMP from XMP (L-Gln route): step 1/1. Functionally, catalyzes the synthesis of GMP from XMP. The chain is GMP synthase [glutamine-hydrolyzing] from Rhizobium etli (strain ATCC 51251 / DSM 11541 / JCM 21823 / NBRC 15573 / CFN 42).